The following is a 270-amino-acid chain: tRNA pseudouridine synthase A (270 aa).

Asp60 serves as the catalytic Nucleophile. Substrate is bound at residue Tyr118.

This sequence belongs to the tRNA pseudouridine synthase TruA family. In terms of assembly, homodimer.

The catalysed reaction is uridine(38/39/40) in tRNA = pseudouridine(38/39/40) in tRNA. Formation of pseudouridine at positions 38, 39 and 40 in the anticodon stem and loop of transfer RNAs. The polypeptide is tRNA pseudouridine synthase A (Salmonella agona (strain SL483)).